The following is a 307-amino-acid chain: NAD kinase 1 (307 aa).

Catalysis depends on aspartate 67, which acts as the Proton acceptor. NAD(+) is bound by residues 67–68 (DG), 149–150 (NE), arginine 160, aspartate 181, and 192–197 (TCYTSS).

It belongs to the NAD kinase family. A divalent metal cation is required as a cofactor.

It localises to the cytoplasm. It catalyses the reaction NAD(+) + ATP = ADP + NADP(+) + H(+). Involved in the regulation of the intracellular balance of NAD and NADP, and is a key enzyme in the biosynthesis of NADP. Catalyzes specifically the phosphorylation on 2'-hydroxyl of the adenosine moiety of NAD to yield NADP. Essential for photoheterotrophic growth. Has a significant function in the oxidative pentose phosphate (OPP) pathway for glucose catabolism under photoheterotrophic conditions. Is also involved in cellular redox homeostasis. This chain is NAD kinase 1, found in Synechocystis sp. (strain ATCC 27184 / PCC 6803 / Kazusa).